The chain runs to 323 residues: Acetyl-coenzyme A carboxylase carboxyl transferase subunit alpha (323 aa).

The CoA carboxyltransferase C-terminal domain maps to 39-293; it reads RLSKKSQQLT…RRALADSLRQ (255 aa).

The protein belongs to the AccA family. In terms of assembly, acetyl-CoA carboxylase is a heterohexamer composed of biotin carboxyl carrier protein (AccB), biotin carboxylase (AccC) and two subunits each of ACCase subunit alpha (AccA) and ACCase subunit beta (AccD).

The protein localises to the cytoplasm. It catalyses the reaction N(6)-carboxybiotinyl-L-lysyl-[protein] + acetyl-CoA = N(6)-biotinyl-L-lysyl-[protein] + malonyl-CoA. Its pathway is lipid metabolism; malonyl-CoA biosynthesis; malonyl-CoA from acetyl-CoA: step 1/1. Its function is as follows. Component of the acetyl coenzyme A carboxylase (ACC) complex. First, biotin carboxylase catalyzes the carboxylation of biotin on its carrier protein (BCCP) and then the CO(2) group is transferred by the carboxyltransferase to acetyl-CoA to form malonyl-CoA. This chain is Acetyl-coenzyme A carboxylase carboxyl transferase subunit alpha, found in Paraburkholderia phytofirmans (strain DSM 17436 / LMG 22146 / PsJN) (Burkholderia phytofirmans).